The sequence spans 142 residues: Phosphoribosyl-AMP cyclohydrolase (142 aa).

Asp-92 is a Mg(2+) binding site. Cys-93 provides a ligand contact to Zn(2+). Residues Asp-94 and Asp-96 each contribute to the Mg(2+) site. Cys-109 and Cys-116 together coordinate Zn(2+).

The protein belongs to the PRA-CH family. Homodimer. Mg(2+) serves as cofactor. Zn(2+) is required as a cofactor.

The protein resides in the cytoplasm. The catalysed reaction is 1-(5-phospho-beta-D-ribosyl)-5'-AMP + H2O = 1-(5-phospho-beta-D-ribosyl)-5-[(5-phospho-beta-D-ribosylamino)methylideneamino]imidazole-4-carboxamide. It functions in the pathway amino-acid biosynthesis; L-histidine biosynthesis; L-histidine from 5-phospho-alpha-D-ribose 1-diphosphate: step 3/9. In terms of biological role, catalyzes the hydrolysis of the adenine ring of phosphoribosyl-AMP. This chain is Phosphoribosyl-AMP cyclohydrolase, found in Alcanivorax borkumensis (strain ATCC 700651 / DSM 11573 / NCIMB 13689 / SK2).